Here is a 309-residue protein sequence, read N- to C-terminus: Porphobilinogen deaminase (309 aa).

S-(dipyrrolylmethanemethyl)cysteine is present on Cys242.

Belongs to the HMBS family. In terms of assembly, monomer. Requires dipyrromethane as cofactor.

It catalyses the reaction 4 porphobilinogen + H2O = hydroxymethylbilane + 4 NH4(+). It functions in the pathway porphyrin-containing compound metabolism; protoporphyrin-IX biosynthesis; coproporphyrinogen-III from 5-aminolevulinate: step 2/4. Its function is as follows. Tetrapolymerization of the monopyrrole PBG into the hydroxymethylbilane pre-uroporphyrinogen in several discrete steps. The polypeptide is Porphobilinogen deaminase (Hamiltonella defensa subsp. Acyrthosiphon pisum (strain 5AT)).